Consider the following 184-residue polypeptide: Gastrokine-2 (184 aa).

The first 20 residues, 1-20, serve as a signal peptide directing secretion; the sequence is MKSLVAFLVVLSILRIQSQA. One can recognise a BRICHOS domain in the interval 54 to 151; that stretch reads HSGSCSSTTI…LCKHIPLYEG (98 aa). A disulfide bridge connects residues Cys81 and Cys143.

As to quaternary structure, heterodimer with TFF1; disulfide linked. Interacts with TFF2.

It is found in the secreted. The protein is Gastrokine-2 (Gkn2) of Rattus norvegicus (Rat).